A 441-amino-acid polypeptide reads, in one-letter code: MAEFEIYREYVDKSYEPQKDDIVAVFRITPAEGFTIEDAAGAVAAESSTGTWTSLHPWYDEERVKGLSAKAYDFVDLGDGSSIVRIAYPSELFEPHNMPGLLASIAGNVFGMKRVKGLRLEDLQLPKSFLKDFKGPSKGKEGVKKIFGVADRPIVGTVPKPKVGYSAEEVEKLAYELLSGGMDYIKDDENLTSPAYCRFEERAERIMKVIEKVEAETGEKKSWFANITADVREMERRLKLVAELGNPHVMVDVVITGWGALEYIRDLAEDYDLAIHGHRAMHAAFTRNAKHGISMFVLAKLYRIIGIDQLHIGTAGAGKLEGQKWDTVQNARIFSEVEYTPDEGDAFHLSQNFHHIKPAMPVSSGGLHPGNLEPVIDALGKEIVIQVGGGVLGHPMGAKAGAKAVRQALDAIISAIPLEEHAKQHPELQAALEKWGRVTPI.

K160 functions as the Proton acceptor in the catalytic mechanism. K162 is a substrate binding site. Mg(2+)-binding residues include K186, D188, and E189. The residue at position 186 (K186) is an N6-carboxylysine. The active-site Proton acceptor is H278. Substrate is bound by residues R279, H311, 364-366, and 386-389; these read SGG and QVGG.

Belongs to the RuBisCO large chain family. Type III subfamily. As to quaternary structure, homodimer. In contrast to form I RuBisCO, the form III RuBisCO is composed solely of large subunits. The cofactor is Mg(2+).

The enzyme catalyses 2 (2R)-3-phosphoglycerate + 2 H(+) = D-ribulose 1,5-bisphosphate + CO2 + H2O. It carries out the reaction D-ribulose 1,5-bisphosphate + O2 = 2-phosphoglycolate + (2R)-3-phosphoglycerate + 2 H(+). Reversibly inhibited by O(2). In terms of biological role, catalyzes the addition of molecular CO(2) and H(2)O to ribulose 1,5-bisphosphate (RuBP), generating two molecules of 3-phosphoglycerate (3-PGA). Functions in an archaeal AMP degradation pathway, together with AMP phosphorylase and R15P isomerase. This is Ribulose bisphosphate carboxylase from Archaeoglobus fulgidus (strain ATCC 49558 / DSM 4304 / JCM 9628 / NBRC 100126 / VC-16).